A 444-amino-acid chain; its full sequence is Proline--tRNA ligase (444 aa).

Belongs to the class-II aminoacyl-tRNA synthetase family. ProS type 2 subfamily. In terms of assembly, homodimer.

Its subcellular location is the cytoplasm. It carries out the reaction tRNA(Pro) + L-proline + ATP = L-prolyl-tRNA(Pro) + AMP + diphosphate. Its function is as follows. Catalyzes the attachment of proline to tRNA(Pro) in a two-step reaction: proline is first activated by ATP to form Pro-AMP and then transferred to the acceptor end of tRNA(Pro). This Bradyrhizobium sp. (strain BTAi1 / ATCC BAA-1182) protein is Proline--tRNA ligase.